Reading from the N-terminus, the 561-residue chain is Cation diffusion facilitator family protein 1 (561 aa).

Basic and acidic residues predominate over residues 1-20 (MEVTMEDRSVKADKADRDDN). The tract at residues 1-26 (MEVTMEDRSVKADKADRDDNNTTSTE) is disordered. The Cytoplasmic portion of the chain corresponds to 1 to 112 (MEVTMEDRSV…SESVKGVSRS (112 aa)). The helical transmembrane segment at 113–133 (LIIQIGMTVIFCALEFITGVV) threads the bilayer. Topologically, residues 134-136 (CSS) are extracellular. Residues 137-157 (IAMLADSYHMAADVMALIVAF) form a helical membrane-spanning segment. The Cytoplasmic segment spans residues 158-176 (TCIKIATRPSTRLGYGWVR). The chain crosses the membrane as a helical span at residues 177–197 (AETLGGFFNGIFMCTVCVLVF). Residues 198–215 (QEAVGRIINVHMITHPLQ) are Extracellular-facing. Residues 216 to 236 (VLVIGFIGLLINLFGMFNLSG) traverse the membrane as a helical segment. The Cytoplasmic portion of the chain corresponds to 237 to 391 (HGHSHGGGSH…NVNIHGVWLH (155 aa)). Residues 240–304 (SHGGGSHGHS…HTRLNGKFRS (65 aa)) form a disordered region. The tract at residues 246–270 (HGHSHGGSHGHSHNNKKTKKNDGHG) is 6 X 2 AA approximate repeats of H-G. The span at 247-264 (GHSHGGSHGHSHNNKKTK) shows a compositional bias: basic residues. Residues 392–412 (LLSDAFGSVIVMISAGFVYFL) traverse the membrane as a helical segment. At 413–420 (PTWKIAAY) the chain is on the extracellular side. Residues 421-441 (LDPILSISLASIMGFTAVVLV) form a helical membrane-spanning segment. Residues 442 to 561 (KTSGEKLLKQ…SVSTENEITE (120 aa)) lie on the Cytoplasmic side of the membrane.

Belongs to the cation diffusion facilitator (CDF) transporter (TC 2.A.4) family. SLC30A subfamily. Interacts with lin-45 in a zinc-dependent manner. As to expression, expressed in intestinal cells. Expressed in the vulva.

It is found in the basolateral cell membrane. Involved in the regulation of Pn.p cell fate determination. Involved in zinc metabolism and the decrease of the cytosolic zinc concentration which is thought to modulate Ras signaling. Involved in zinc transport from the intestinal lumen to the pseudocoelum. The polypeptide is Cation diffusion facilitator family protein 1 (cdf-1) (Caenorhabditis elegans).